A 435-amino-acid polypeptide reads, in one-letter code: Aspartate--tRNA(Asp/Asn) ligase (435 aa).

Glu163 contributes to the L-aspartate binding site. Residues 185–188 (QLYK) form an aspartate region. Arg206 is an L-aspartate binding site. ATP-binding positions include 206–208 (RAE), 214–216 (RHL), and Glu358. L-aspartate contacts are provided by Ser361 and Arg365. ATP is bound at residue 406–409 (GAER).

It belongs to the class-II aminoacyl-tRNA synthetase family. Type 2 subfamily. Homodimer.

The protein localises to the cytoplasm. It carries out the reaction tRNA(Asx) + L-aspartate + ATP = L-aspartyl-tRNA(Asx) + AMP + diphosphate. Functionally, aspartyl-tRNA synthetase with relaxed tRNA specificity since it is able to aspartylate not only its cognate tRNA(Asp) but also tRNA(Asn). Reaction proceeds in two steps: L-aspartate is first activated by ATP to form Asp-AMP and then transferred to the acceptor end of tRNA(Asp/Asn). Is slightly more efficient at aminoacylating tRNA(Asn) over tRNA(Asp). This Deinococcus radiodurans (strain ATCC 13939 / DSM 20539 / JCM 16871 / CCUG 27074 / LMG 4051 / NBRC 15346 / NCIMB 9279 / VKM B-1422 / R1) protein is Aspartate--tRNA(Asp/Asn) ligase (aspS2).